Consider the following 203-residue polypeptide: CASP-like protein 2U5 (203 aa).

At M1–R31 the chain is on the cytoplasmic side. The chain crosses the membrane as a helical span at residues T32–I52. Residues T53 to Y84 are Extracellular-facing. N67 is a glycosylation site (N-linked (GlcNAc...) asparagine). A helical transmembrane segment spans residues L85–I105. Residues S106–K111 are Cytoplasmic-facing. A helical transmembrane segment spans residues A112–A132. The Extracellular segment spans residues A133–Q164. A helical transmembrane segment spans residues L165–I185. At S186–G203 the chain is on the cytoplasmic side.

The protein belongs to the Casparian strip membrane proteins (CASP) family. Homodimer and heterodimers.

The protein resides in the cell membrane. The polypeptide is CASP-like protein 2U5 (Selaginella moellendorffii (Spikemoss)).